The chain runs to 1568 residues: Kielin/chordin-like protein (1568 aa).

Residues 1 to 23 (MAGVGAAALSLLLHLGALALAAG) form the signal peptide. Positions 27 to 49 (GAVPREPPGQQTTAHSSVLAGNS) are disordered. The segment covering 35–49 (GQQTTAHSSVLAGNS) has biased composition (polar residues). Residues 60–87 (LGRLEAAVMELREQNKDLQTRVRQLESC) are a coiled coil. VWFC domains are found at residues 136 to 193 (RGCS…PICR), 194 to 253 (PGCD…PTCQ), 253 to 312 (QGCT…PVCD), 312 to 370 (DGCF…PVCD), 426 to 485 (PACE…PSCD), 485 to 544 (DSCT…PRCP), 544 to 602 (PDCI…NDCS), 602 to 661 (SGCA…PQCP), 667 to 725 (AGCP…PSCD), 725 to 782 (DGCL…PDCD), 782 to 841 (DGCE…PTCQ), 900 to 959 (HSCL…PRCR), 959 to 1017 (RGCL…PQCS), 1017 to 1085 (SDCE…PTCA), 1082 to 1145 (PTCA…PVCR), and 1149 to 1209 (QSCV…PRCL). N340 is a glycosylation site (N-linked (GlcNAc...) asparagine). N499 carries N-linked (GlcNAc...) asparagine glycosylation. Residue N1090 is glycosylated (N-linked (GlcNAc...) asparagine). The VWFD domain occupies 1213-1389 (ASCMAFGDPH…EGLWPGRPCS (177 aa)). 2 disulfide bridges follow: C1215–C1347 and C1237–C1388. Residues 1483–1543 (CPLERGFVFD…EAHCIPPEAC (61 aa)) enclose the TIL domain.

In terms of assembly, interacts with BMP7 and, by doing so, enhances binding to the type I receptors that contains cytoplasmic serine/threonine protein kinase domains. Also able to interact with activin-A and TGFB1.

It is found in the secreted. Enhances bone morphogenetic protein (BMP) signaling in a paracrine manner. In contrast, it inhibits both the activin-A and TGFB1-mediated signaling pathways. The polypeptide is Kielin/chordin-like protein (Homo sapiens (Human)).